The primary structure comprises 790 residues: LPS-assembly protein LptD (790 aa).

Residues 1 to 20 (MRMLRWLILSAFSVAGAVQA) form the signal peptide.

This sequence belongs to the LptD family. As to quaternary structure, component of the lipopolysaccharide transport and assembly complex. Interacts with LptE and LptA.

The protein localises to the cell outer membrane. In terms of biological role, together with LptE, is involved in the assembly of lipopolysaccharide (LPS) at the surface of the outer membrane. The chain is LPS-assembly protein LptD from Bordetella parapertussis (strain 12822 / ATCC BAA-587 / NCTC 13253).